We begin with the raw amino-acid sequence, 151 residues long: Glycosylation-dependent cell adhesion molecule 1 (151 aa).

Positions 1-19 are cleaved as a signal peptide; it reads MKFFTVLLFVSLAATSLAL. Residues 29 to 123 are disordered; that stretch reads MKTQPTDAIP…ENLTKSSQTV (95 aa). The segment covering 42–52 has biased composition (low complexity); the sequence is STPTSYTSEES. Positions 53-71 are enriched in basic and acidic residues; that stretch reads TSSKDLSKEPSIFREELIS. Ser54, Ser59, Ser63, and Ser71 each carry phosphoserine. Over residues 103–114 the composition is skewed to low complexity; that stretch reads RPTTSAATTSEE. Asn115 is a glycosylation site (N-linked (GlcNAc...) asparagine).

It belongs to the PP3/GlyCAM-1 family. Extensively O-glycosylated. Lymph nodes. Associated with the lumenal surface of the high endothelial venules of peripheral lymph nodes.

The protein localises to the cell membrane. In terms of biological role, adhesion molecule that accomplishes cell binding by presenting carbohydrate(s) to the lectin domain of L-selectin. In Mus musculus (Mouse), this protein is Glycosylation-dependent cell adhesion molecule 1 (Glycam1).